Consider the following 941-residue polypeptide: Isoleucine--tRNA ligase (941 aa).

The 'HIGH' region motif lies at 58-68 (PYANGNIHIGH). Residue glutamate 564 coordinates L-isoleucyl-5'-AMP. The short motif at 605-609 (KMSKS) is the 'KMSKS' region element. An ATP-binding site is contributed by lysine 608. 4 residues coordinate Zn(2+): cysteine 904, cysteine 907, cysteine 924, and cysteine 927.

This sequence belongs to the class-I aminoacyl-tRNA synthetase family. IleS type 1 subfamily. Monomer. Zn(2+) is required as a cofactor.

It localises to the cytoplasm. The catalysed reaction is tRNA(Ile) + L-isoleucine + ATP = L-isoleucyl-tRNA(Ile) + AMP + diphosphate. Catalyzes the attachment of isoleucine to tRNA(Ile). As IleRS can inadvertently accommodate and process structurally similar amino acids such as valine, to avoid such errors it has two additional distinct tRNA(Ile)-dependent editing activities. One activity is designated as 'pretransfer' editing and involves the hydrolysis of activated Val-AMP. The other activity is designated 'posttransfer' editing and involves deacylation of mischarged Val-tRNA(Ile). This Buchnera aphidicola subsp. Cinara cedri (strain Cc) protein is Isoleucine--tRNA ligase.